We begin with the raw amino-acid sequence, 240 residues long: MSLEPVYKRVLLKASGEALMGAQGFGIDVTVADRIASDIAEARHMGVEVGVVVGGGNIFRGVAVASKGGDRVTGDHMGMLGTIINALALATSLRKLNIDTVVLSAISMPEICESFSQRATLYHLSMGRVVIFAGGTGNPFFTTDSAAALRAAEMGAQAIFKGTQVDGIYTADPKKYPDATRFDRLTHQEVLDRGLAVMDVAAVALARENSIPIIVFSIHEKGGFAEILTGGGLKTIVSDN.

Position 13–16 (13–16 (KASG)) interacts with ATP. Residues 21-26 (GAQGFG) are involved in allosteric activation by GTP. Glycine 55 is a binding site for UMP. The ATP site is built by glycine 56 and arginine 60. UMP-binding positions include aspartate 75 and 136 to 143 (TGNPFFTT). ATP contacts are provided by threonine 163, glutamine 164, tyrosine 169, and aspartate 172.

The protein belongs to the UMP kinase family. In terms of assembly, homohexamer.

It is found in the cytoplasm. It catalyses the reaction UMP + ATP = UDP + ADP. Its pathway is pyrimidine metabolism; CTP biosynthesis via de novo pathway; UDP from UMP (UMPK route): step 1/1. Its activity is regulated as follows. Allosterically activated by GTP. Inhibited by UTP. Functionally, catalyzes the reversible phosphorylation of UMP to UDP. The protein is Uridylate kinase of Rhizobium etli (strain ATCC 51251 / DSM 11541 / JCM 21823 / NBRC 15573 / CFN 42).